A 466-amino-acid chain; its full sequence is CCA-adding enzyme (466 aa).

Ser-55 and Arg-58 together coordinate ATP. Residues Ser-55 and Arg-58 each contribute to the CTP site. Residues Asp-67, Asp-69, and Asp-118 each contribute to the Mg(2+) site. Residues His-141, Lys-161, and Tyr-170 each contribute to the ATP site. CTP-binding residues include His-141, Lys-161, and Tyr-170.

It belongs to the tRNA nucleotidyltransferase/poly(A) polymerase family. Archaeal CCA-adding enzyme subfamily. Homodimer. Mg(2+) serves as cofactor.

The enzyme catalyses a tRNA precursor + 2 CTP + ATP = a tRNA with a 3' CCA end + 3 diphosphate. The catalysed reaction is a tRNA with a 3' CCA end + 2 CTP + ATP = a tRNA with a 3' CCACCA end + 3 diphosphate. Functionally, catalyzes the addition and repair of the essential 3'-terminal CCA sequence in tRNAs without using a nucleic acid template. Adds these three nucleotides in the order of C, C, and A to the tRNA nucleotide-73, using CTP and ATP as substrates and producing inorganic pyrophosphate. tRNA 3'-terminal CCA addition is required both for tRNA processing and repair. Also involved in tRNA surveillance by mediating tandem CCA addition to generate a CCACCA at the 3' terminus of unstable tRNAs. While stable tRNAs receive only 3'-terminal CCA, unstable tRNAs are marked with CCACCA and rapidly degraded. The sequence is that of CCA-adding enzyme from Haloarcula marismortui (strain ATCC 43049 / DSM 3752 / JCM 8966 / VKM B-1809) (Halobacterium marismortui).